Here is a 446-residue protein sequence, read N- to C-terminus: Glucose-6-phosphate isomerase (446 aa).

The active-site Proton donor is E288. Active-site residues include H309 and K423.

Belongs to the GPI family.

The protein resides in the cytoplasm. The catalysed reaction is alpha-D-glucose 6-phosphate = beta-D-fructose 6-phosphate. It participates in carbohydrate biosynthesis; gluconeogenesis. It functions in the pathway carbohydrate degradation; glycolysis; D-glyceraldehyde 3-phosphate and glycerone phosphate from D-glucose: step 2/4. In terms of biological role, catalyzes the reversible isomerization of glucose-6-phosphate to fructose-6-phosphate. This is Glucose-6-phosphate isomerase from Lacticaseibacillus casei (strain BL23) (Lactobacillus casei).